Consider the following 273-residue polypeptide: Signal recognition particle subunit SEC65 (273 aa).

Residues 25–71 (PSLRTPIAPKITPKVVRSQDQENPAFLPGTNNNSNSNNNSSNEKEQL) form a disordered region. A compositionally biased stretch (low complexity) spans 55–65 (NNNSNSNNNSS).

In terms of assembly, fungal signal recognition particle (SRP) complex consists of a 7S RNA molecule (scR1) and at least six protein subunits: SRP72, SRP68, SRP54, SEC65, SRP21 and SRP14.

It is found in the cytoplasm. In terms of biological role, signal-recognition-particle (SRP) assembly has a crucial role in targeting secretory proteins to the rough endoplasmic reticulum (ER) membrane. SRP is required for the cotranslational protein translocation for ER import and preferentially recognizes strongly hydrophobic signal sequences. It is involved in targeting the nascent chain-ribosome (RNC) complex to the ER and is proposed to participate in the arrest of nascent chain elongation during membrane targeting. SEC65 is required for SRP integrity. In Saccharomyces cerevisiae (strain ATCC 204508 / S288c) (Baker's yeast), this protein is Signal recognition particle subunit SEC65 (SEC65).